The chain runs to 171 residues: Probable DNA-directed RNA polymerase subunit delta (171 aa).

The region spanning 14 to 81 (MALVEIAYEI…SDQTWGLRSW (68 aa)) is the HTH HARE-type domain. The tract at residues 138–171 (EFDEIDEADDDELDDLEDEILDDDEDFDEEEDEE) is disordered.

The protein belongs to the RpoE family. In terms of assembly, RNAP is composed of a core of 2 alpha, a beta and a beta' subunits. The core is associated with a delta subunit and one of several sigma factors.

Participates in both the initiation and recycling phases of transcription. In the presence of the delta subunit, RNAP displays an increased specificity of transcription, a decreased affinity for nucleic acids, and an increased efficiency of RNA synthesis because of enhanced recycling. The chain is Probable DNA-directed RNA polymerase subunit delta from Bacillus licheniformis (strain ATCC 14580 / DSM 13 / JCM 2505 / CCUG 7422 / NBRC 12200 / NCIMB 9375 / NCTC 10341 / NRRL NRS-1264 / Gibson 46).